The sequence spans 503 residues: Cytochrome c lysine N-methyltransferase 1 (503 aa).

An SET domain is found at 52–276 (SKFELLRIPR…EEAQVFISYA (225 aa)). The tract at residues 190-291 (NYEKLISTVY…VHFEQIYGFL (102 aa)) is SET-like.

The protein belongs to the class V-like SAM-binding methyltransferase superfamily.

Its subcellular location is the cytoplasm. The protein localises to the cytosol. It catalyses the reaction L-lysyl-[cytochrome c] + S-adenosyl-L-methionine = N(6)-methyl-L-lysyl-[cytochrome c] + S-adenosyl-L-homocysteine + H(+). Methyltransferase which mediates trimethylation of cytochrome c (CYC1). In Kluyveromyces lactis (strain ATCC 8585 / CBS 2359 / DSM 70799 / NBRC 1267 / NRRL Y-1140 / WM37) (Yeast), this protein is Cytochrome c lysine N-methyltransferase 1 (CTM1).